Reading from the N-terminus, the 134-residue chain is Mini-ribonuclease 3 (134 aa).

Residue aspartate 23 is part of the active site.

Belongs to the MrnC RNase family. Homodimer. It depends on Mg(2+) as a cofactor.

Its subcellular location is the cytoplasm. Functionally, involved in correct processing of both the 5' and 3' ends of 23S rRNA precursor. Processes 30S rRNA precursor transcript even in absence of ribonuclease 3 (Rnc); Rnc processes 30S rRNA into smaller rRNA precursors. The chain is Mini-ribonuclease 3 from Brevibacillus brevis (strain 47 / JCM 6285 / NBRC 100599).